The following is a 3351-amino-acid chain: Apolipophorins (3351 aa).

Positions 1–25 (MARMKYNIALIGILASVLLTIAVNA) are cleaved as a signal peptide. The 599-residue stretch at 43 to 641 (YIPGNYYDYS…SQHGFLPRSS (599 aa)) folds into the Vitellogenin domain. Asn-67, Asn-644, Asn-1514, Asn-1744, Asn-1932, Asn-1979, and Asn-2822 each carry an N-linked (GlcNAc...) asparagine glycan. A VWFD domain is found at 2786–2952 (LRGHVVDGKH…DYGVGKCTAI (167 aa)).

As to quaternary structure, interacts with Nrx-1 (via cytoplasmic domain); the interaction supports apolpp/ApoLI protein stability. May be modified covalently by lipidation. Post-translationally, cleaved into 2 chains by furin protease. However, prevention of cleavage does not impair its function. In terms of tissue distribution, during stage 12, it is highly present throughout the yolk sac. By late stage 14, it localizes in the lateral fat body cells. Starting at stage 14, it localizes to the apodemes. Component of hemolymph clots (at protein level). Expressed in the amniosera. Expressed in rhabdomere of photoreceptor cells in retina (at protein level). Expressed in rhabdomere of photoreceptor cells in retina (at protein level). As to expression, expressed in simper cells as well as interphotoreceptor matrix (at protein level).

It localises to the secreted. The protein resides in the cell projection. Its subcellular location is the rhabdomere. Its function is as follows. Constitutes the major component of lipophorin, which mediates transport for various types of lipids in hemolymph. Acts by forming lipoprotein particles that bind lipoproteins and lipids. Also involved in the transport of hydrophobic ligands like juvenile hormones, pheromone hydrocarbons and carotenoids. Required for morphogens wingless (wg) and hedgehog (hh) function, probably by acting as vehicles for the movement of wg and hh, explaining how covalently lipidated wg and hh can spread over long distances. May also be involved in transport and/or metabolism of heme. Involved in yolk granule formation. May be a component of yolk incorporated into yolk granules via yl/yolkless-mediated endocytosis and the endolysosomal pathway. The sequence is that of Apolipophorins from Drosophila melanogaster (Fruit fly).